Reading from the N-terminus, the 185-residue chain is Elongation factor P (185 aa).

It belongs to the elongation factor P family.

The protein localises to the cytoplasm. It functions in the pathway protein biosynthesis; polypeptide chain elongation. Its function is as follows. Involved in peptide bond synthesis. Stimulates efficient translation and peptide-bond synthesis on native or reconstituted 70S ribosomes in vitro. Probably functions indirectly by altering the affinity of the ribosome for aminoacyl-tRNA, thus increasing their reactivity as acceptors for peptidyl transferase. The protein is Elongation factor P of Geobacillus sp. (strain WCH70).